An 89-amino-acid chain; its full sequence is Small ribosomal subunit protein uS17 (89 aa).

The protein belongs to the universal ribosomal protein uS17 family. In terms of assembly, part of the 30S ribosomal subunit.

Its function is as follows. One of the primary rRNA binding proteins, it binds specifically to the 5'-end of 16S ribosomal RNA. The chain is Small ribosomal subunit protein uS17 from Chlorobium chlorochromatii (strain CaD3).